The sequence spans 430 residues: Dihydrolipoyllysine-residue acetyltransferase component of pyruvate dehydrogenase complex (430 aa).

Positions 2–77 (AFEFRLPDIG…VVGDVIVKID (76 aa)) constitute a Lipoyl-binding domain. At Lys43 the chain carries N6-lipoyllysine. The disordered stretch occupies residues 80–122 (DAEDMQFKGHDDDSSSKEEPAKEEAPAEQAPVATQTEEVDENR). The span at 84 to 104 (MQFKGHDDDSSSKEEPAKEEA) shows a compositional bias: basic and acidic residues. Residues 125-162 (KAMPSVRKYAREKGVNIKAVSGSGKNGRITKEDVDAYL) enclose the Peripheral subunit-binding (PSBD) domain. Positions 164–199 (GGAPTASNESAASATSEEVAETPAAPAAVSLEGDFP) are disordered. Low complexity predominate over residues 166–193 (APTASNESAASATSEEVAETPAAPAAVS). The active site involves His401.

Belongs to the 2-oxoacid dehydrogenase family. Forms a 24-polypeptide structural core with octahedral symmetry. (R)-lipoate serves as cofactor.

The catalysed reaction is N(6)-[(R)-dihydrolipoyl]-L-lysyl-[protein] + acetyl-CoA = N(6)-[(R)-S(8)-acetyldihydrolipoyl]-L-lysyl-[protein] + CoA. In terms of biological role, the pyruvate dehydrogenase complex catalyzes the overall conversion of pyruvate to acetyl-CoA and CO(2). It contains multiple copies of three enzymatic components: pyruvate dehydrogenase (E1), dihydrolipoamide acetyltransferase (E2) and lipoamide dehydrogenase (E3). This Staphylococcus aureus (strain Mu50 / ATCC 700699) protein is Dihydrolipoyllysine-residue acetyltransferase component of pyruvate dehydrogenase complex (pdhC).